Reading from the N-terminus, the 144-residue chain is UPF0102 protein Veis_0630 (144 aa).

The segment at 11–31 (PPAAAPGPAPAPASAATASER) is disordered.

Belongs to the UPF0102 family.

This is UPF0102 protein Veis_0630 from Verminephrobacter eiseniae (strain EF01-2).